A 123-amino-acid polypeptide reads, in one-letter code: Large ribosomal subunit protein uL24 (123 aa).

Belongs to the universal ribosomal protein uL24 family. As to quaternary structure, part of the 50S ribosomal subunit.

In terms of biological role, one of two assembly initiator proteins, it binds directly to the 5'-end of the 23S rRNA, where it nucleates assembly of the 50S subunit. Its function is as follows. Located at the polypeptide exit tunnel on the outside of the subunit. This is Large ribosomal subunit protein uL24 from Pyrobaculum aerophilum (strain ATCC 51768 / DSM 7523 / JCM 9630 / CIP 104966 / NBRC 100827 / IM2).